A 79-amino-acid polypeptide reads, in one-letter code: Conotoxin MIVA (79 aa).

Positions 1-21 (MGMRMMFTVFLLVVLATTVVS) are cleaved as a signal peptide. Positions 22 to 38 (IPSDRASDGRNAVVHER) are excised as a propeptide. At Pro40 the chain carries 4-hydroxyproline. At Glu41 the chain carries 4-carboxyglutamate. 2 O-linked (HexNAc...) threonine glycosylation sites follow: Thr45 and Thr47. Residues Pro55, Pro60, Pro61, Pro69, Pro70, and Pro74 each carry the 4-hydroxyproline modification. At Pro74 the chain carries Proline amide. Residues 75–79 (GRRND) constitute a propeptide that is removed on maturation.

Post-translationally, O-linked glycan consists of Hex4-HexNAc2 hexasaccharide. Contains 3 disulfide bonds. As to expression, expressed by the venom duct.

It localises to the secreted. Probable neurotoxin with ion channel inhibitor activity. The sequence is that of Conotoxin MIVA from Conus magus (Magical cone).